Here is a 508-residue protein sequence, read N- to C-terminus: Arabinose import ATP-binding protein AraG (508 aa).

2 ABC transporter domains span residues 5 to 240 (LEFQ…MVGR) and 250 to 496 (ARTL…LPDA). 37 to 44 (GENGAGKS) is a binding site for ATP.

The protein belongs to the ABC transporter superfamily. Arabinose importer (TC 3.A.1.2.2) family. In terms of assembly, the complex is composed of two ATP-binding proteins (AraG), two transmembrane proteins (AraH) and a solute-binding protein (AraF).

Its subcellular location is the cell inner membrane. It carries out the reaction L-arabinose(out) + ATP + H2O = L-arabinose(in) + ADP + phosphate + H(+). Functionally, part of the ABC transporter complex AraFGH involved in arabinose import. Responsible for energy coupling to the transport system. This is Arabinose import ATP-binding protein AraG from Rhizobium meliloti (strain 1021) (Ensifer meliloti).